We begin with the raw amino-acid sequence, 294 residues long: Ribosomal protein L11 methyltransferase (294 aa).

The S-adenosyl-L-methionine site is built by T146, G167, D189, and N231.

It belongs to the methyltransferase superfamily. PrmA family.

The protein localises to the cytoplasm. It catalyses the reaction L-lysyl-[protein] + 3 S-adenosyl-L-methionine = N(6),N(6),N(6)-trimethyl-L-lysyl-[protein] + 3 S-adenosyl-L-homocysteine + 3 H(+). Its function is as follows. Methylates ribosomal protein L11. This Aliivibrio salmonicida (strain LFI1238) (Vibrio salmonicida (strain LFI1238)) protein is Ribosomal protein L11 methyltransferase.